A 195-amino-acid chain; its full sequence is Imidazoleglycerol-phosphate dehydratase (195 aa).

This sequence belongs to the imidazoleglycerol-phosphate dehydratase family.

It localises to the cytoplasm. It catalyses the reaction D-erythro-1-(imidazol-4-yl)glycerol 3-phosphate = 3-(imidazol-4-yl)-2-oxopropyl phosphate + H2O. The protein operates within amino-acid biosynthesis; L-histidine biosynthesis; L-histidine from 5-phospho-alpha-D-ribose 1-diphosphate: step 6/9. The sequence is that of Imidazoleglycerol-phosphate dehydratase from Bacillus cytotoxicus (strain DSM 22905 / CIP 110041 / 391-98 / NVH 391-98).